Here is a 198-residue protein sequence, read N- to C-terminus: Prostamide/prostaglandin F synthase (198 aa).

Residue Tyr-108 is modified to Phosphotyrosine.

This sequence belongs to the peroxiredoxin-like PRXL2 family. Prostamide/prostaglandin F synthase subfamily.

It is found in the cytoplasm. It localises to the cytosol. The enzyme catalyses prostaglandin H2 + [thioredoxin]-dithiol = prostaglandin F2alpha + [thioredoxin]-disulfide. It catalyses the reaction prostamide F2alpha + [thioredoxin]-disulfide = prostamide H2 + [thioredoxin]-dithiol. Catalyzes the reduction of prostaglandin-ethanolamide H(2) (prostamide H(2)) to prostamide F(2alpha) with NADPH as proton donor. Also able to reduce prostaglandin H(2) to prostaglandin F(2alpha). The protein is Prostamide/prostaglandin F synthase (PRXL2B) of Pongo abelii (Sumatran orangutan).